A 349-amino-acid chain; its full sequence is Magnesium-protoporphyrin IX monomethyl ester [oxidative] cyclase (349 aa).

The protein belongs to the AcsF family. Fe cation serves as cofactor.

The protein localises to the plastid. It localises to the chloroplast. It carries out the reaction Mg-protoporphyrin IX 13-monomethyl ester + 3 NADPH + 3 O2 + 2 H(+) = 3,8-divinyl protochlorophyllide a + 3 NADP(+) + 5 H2O. Its pathway is porphyrin-containing compound metabolism; chlorophyll biosynthesis (light-independent). Its function is as follows. Catalyzes the formation of the isocyclic ring in chlorophyll biosynthesis. Mediates the cyclase reaction, which results in the formation of divinylprotochlorophyllide (Pchlide) characteristic of all chlorophylls from magnesium-protoporphyrin IX 13-monomethyl ester (MgPMME). The sequence is that of Magnesium-protoporphyrin IX monomethyl ester [oxidative] cyclase from Pyropia yezoensis (Susabi-nori).